A 120-amino-acid polypeptide reads, in one-letter code: UPF0231 protein YacL (120 aa).

This sequence belongs to the UPF0231 family.

The sequence is that of UPF0231 protein YacL from Escherichia coli (strain SMS-3-5 / SECEC).